We begin with the raw amino-acid sequence, 361 residues long: DNA replication and repair protein RecF (361 aa).

30 to 37 contributes to the ATP binding site; the sequence is GDNAQGKT.

This sequence belongs to the RecF family.

The protein resides in the cytoplasm. The RecF protein is involved in DNA metabolism; it is required for DNA replication and normal SOS inducibility. RecF binds preferentially to single-stranded, linear DNA. It also seems to bind ATP. The protein is DNA replication and repair protein RecF of Clostridium novyi (strain NT).